The primary structure comprises 263 residues: Follistatin-related protein 3 (263 aa).

Residues 1–26 (MRPGAPGPLWPLPWGALAWAVGFVSS) form the signal peptide. The region spanning 36-107 (GVCWLQQGQE…SCDGVECGPG (72 aa)) is the TB domain. Disulfide bonds link Cys-38/Cys-61, Cys-48/Cys-92, Cys-62/Cys-95, Cys-99/Cys-110, Cys-104/Cys-119, Cys-121/Cys-153, Cys-125/Cys-146, Cys-135/Cys-167, Cys-171/Cys-182, Cys-176/Cys-192, Cys-195/Cys-229, Cys-200/Cys-222, and Cys-211/Cys-243. An N-linked (GlcNAc...) asparagine glycan is attached at Asn-73. In terms of domain architecture, Follistatin-like 1 spans 99-119 (CDGVECGPGKACRMLGGRPRC). The Kazal-like 1 domain maps to 113 to 169 (LGGRPRCECAPDCSGLPARLQVCGSDGATYRDECELRAARCRGHPDLSVMYRGRCRK). The region spanning 170–193 (SCEHVVCPRPQSCVVDQTGSAHCV) is the Follistatin-like 2 domain. Residues 189 to 245 (SAHCVVCRAAPCPVPSSPGQELCGNNNVTYISSCHMRQATCFLGRSIGVRHAGSCAG) form the Kazal-like 2 domain. Asn-215 is a glycosylation site (N-linked (GlcNAc...) asparagine). The tract at residues 242-263 (SCAGTPEEPPGGESAEEEENFV) is disordered. Phosphoserine; by FAM20C is present on Ser-255.

As to quaternary structure, interacts with INHBA and INHBB. Interacts with FN1. Interacts with ADAM12. Isoform 2 interacts with MLLT10; the interaction enhances MLLT10 in vitro transcriptional activity and self-association. Interacts with MSTN. Expressed in a wide range of tissues.

Its subcellular location is the secreted. It localises to the nucleus. Functionally, isoform 1 or the secreted form is a binding and antagonizing protein for members of the TGF-beta family, such as activin, BMP2 and MSTN. Inhibits activin A-, activin B-, BMP2- and MSDT-induced cellular signaling; more effective on activin A than on activin B. Involved in bone formation; inhibits osteoclast differentiation. Involved in hematopoiesis; involved in differentiation of hemopoietic progenitor cells, increases hematopoietic cell adhesion to fibronectin and seems to contribute to the adhesion of hematopoietic precursor cells to the bone marrow stroma. Isoform 2 or the nuclear form is probably involved in transcriptional regulation via interaction with MLLT10. The protein is Follistatin-related protein 3 (FSTL3) of Homo sapiens (Human).